Here is a 514-residue protein sequence, read N- to C-terminus: MHDRLIIFDTTLRDGEQSPGASMTRDEKVRIARALERLKVDVIEAGFPAASPGDFEAVQAVARTIKDSRVCGLARALDRDIDRAGEALKDAQRARIHTFIATSPIHMRHKLQMSPDQVVEYAVKAVKRARQYTDDVEFSPEDAGRSEEDFLCRILEAVIDAGATTLNIPDTVGYAFPEQFGHMIGRLIERIPNSDKAVFSVHCHNDLGLAVANSLAAVLHGARQVECTINGLGERAGNAALEEIVMAVRTRKDIFPCHTDIETREIVACSKLVSSITGFPIQPNKAIVGANAFAHESGIHQDGVLKSRETYEIMSAEDVGWSTNRMVLGKHSGRNAFRTRMQELGIEFASEEELNSVFQRFKVLADKKHEIFDEDLQALITEAGAEAEDERVKLVALRVCSETGEIPHAQVTIKVDNEERTGTSSGGGAVDASLKAIESLLHTDTALTLYSVNNITSGTDAQGEVTVRLEKGGRIVNGQGADTDIVIASAKAYVNAVNKLLAPIQRTHPQVGDV.

One can recognise a Pyruvate carboxyltransferase domain in the interval 5–267 (LIIFDTTLRD…HTDIETREIV (263 aa)). Mn(2+) contacts are provided by Asp-14, His-202, His-204, and Asn-238. Positions 393 to 514 (KLVALRVCSE…QRTHPQVGDV (122 aa)) are regulatory domain.

It belongs to the alpha-IPM synthase/homocitrate synthase family. LeuA type 1 subfamily. In terms of assembly, homodimer. Mn(2+) is required as a cofactor.

The protein localises to the cytoplasm. The catalysed reaction is 3-methyl-2-oxobutanoate + acetyl-CoA + H2O = (2S)-2-isopropylmalate + CoA + H(+). It functions in the pathway amino-acid biosynthesis; L-leucine biosynthesis; L-leucine from 3-methyl-2-oxobutanoate: step 1/4. Functionally, catalyzes the condensation of the acetyl group of acetyl-CoA with 3-methyl-2-oxobutanoate (2-ketoisovalerate) to form 3-carboxy-3-hydroxy-4-methylpentanoate (2-isopropylmalate). This Methylococcus capsulatus (strain ATCC 33009 / NCIMB 11132 / Bath) protein is 2-isopropylmalate synthase.